Consider the following 108-residue polypeptide: UPF0060 membrane protein YnfA (108 aa).

Residues 1-5 (MLKTT) lie on the Periplasmic side of the membrane. A helical transmembrane segment spans residues 6 to 26 (LLFFVTALCEIIGCFLPWLWL). The Cytoplasmic portion of the chain corresponds to 27 to 30 (KRGA). The chain crosses the membrane as a helical span at residues 31–51 (SMWWLLPAAASLALFVWLLTL). At 52–60 (HPAASGRVY) the chain is on the periplasmic side. A helical membrane pass occupies residues 61-81 (AAYGGVYVCTALLWLRVVDGV). The Cytoplasmic segment spans residues 82–84 (RLT). Residues 85-105 (VYDWCGALIALCGMLIIVVGW) traverse the membrane as a helical segment. Residues 106–108 (GRT) are Periplasmic-facing.

Belongs to the UPF0060 family.

It is found in the cell inner membrane. The chain is UPF0060 membrane protein YnfA from Salmonella schwarzengrund (strain CVM19633).